A 486-amino-acid polypeptide reads, in one-letter code: Hexosaminidase D (486 aa).

The Proton donor role is filled by E149.

It belongs to the glycosyl hydrolase 20 family. As to quaternary structure, homodimer; disulfide-linked. As to expression, expressed in synovial fibroblasts and synovial membranes.

Its subcellular location is the cytoplasm. It is found in the nucleus. The protein localises to the extracellular vesicle. The enzyme catalyses Hydrolysis of terminal non-reducing N-acetyl-D-hexosamine residues in N-acetyl-beta-D-hexosaminides.. With respect to regulation, inhibited by O-(2-acetamido-2-deoxy-D-glucopyranosylidene)amino N-phenylcarbamate (PUGNAc). Inhibited by galacto-NAG-thiazoline. In terms of biological role, has hexosaminidase activity. Responsible for the cleavage of the monosaccharides N-acetylglucosamine (GlcNAc) and N-acetylgalactosamine (GalNAc) from cellular substrates. Has a preference for galactosaminide over glucosaminide substrates. This is Hexosaminidase D from Homo sapiens (Human).